A 63-amino-acid polypeptide reads, in one-letter code: Small ribosomal subunit protein eS17 (63 aa).

It belongs to the eukaryotic ribosomal protein eS17 family.

The chain is Small ribosomal subunit protein eS17 from Methanococcus maripaludis (strain C7 / ATCC BAA-1331).